Here is a 314-residue protein sequence, read N- to C-terminus: Vacuolar membrane protein FOSTERSO_4058 (314 aa).

The interval 32–59 (KPTSSVVSETSSKSLPSLTSSAFSTSSG) is disordered. The helical transmembrane segment at 93-113 (VYIAVGAVIGAIFISILIWWL) threads the bilayer. A phosphoserine mark is found at Ser-148, Ser-254, and Ser-274. The segment at 240–309 (EERKLNLNRP…PSMFLDDVLN (70 aa)) is disordered. Residues 254–269 (SPERKEKKINSMEGYH) show a composition bias toward basic and acidic residues.

This sequence belongs to the PRM5 family.

The protein resides in the vacuole membrane. The protein is Vacuolar membrane protein FOSTERSO_4058 of Saccharomyces cerevisiae (strain FostersO) (Baker's yeast).